We begin with the raw amino-acid sequence, 408 residues long: Putative glutamate--cysteine ligase 2 (408 aa).

This sequence belongs to the glutamate--cysteine ligase type 2 family. YbdK subfamily.

It catalyses the reaction L-cysteine + L-glutamate + ATP = gamma-L-glutamyl-L-cysteine + ADP + phosphate + H(+). ATP-dependent carboxylate-amine ligase which exhibits weak glutamate--cysteine ligase activity. The sequence is that of Putative glutamate--cysteine ligase 2 from Bradyrhizobium sp. (strain BTAi1 / ATCC BAA-1182).